The primary structure comprises 507 residues: MTRPKPVVLCILDGWGISSRPEQSAPDQARTPNFDRLMRGCPHGTLVTFGPDVGLPKGQMGNSEVGHTNIGAGRVVAMDLGQIDLAIEDGSFYENAALGEFIRKLKASGGTAHLMGVVSDGGVHGHIQHVIAAARAVTDKGVPVVIHVVTDGRDVPPQSAMGFVTELLGELPEAARIGTVVGRYYAMDRDNRWERVARAYAAMVRAEGLPAPDAAQAVADAYARGETDEFIQPTVVEGYAGAKDGDGFFCLNFRADRAREILAAIGQPDFSAFDTGRRPEWAALLGMVDYSTSHDEYMQAAYPKRQVVNTLGAWVAARGLRQFRLAETEKYPHVTFFLNGGKETPEEGEDRFMPASPKVATYDLAPEMAAPEVSAKLVEAIEAGYDLIVVNYANPDMVGHTGSLPAAIRACEAVDKGLGMMLEALEKAGGAAVVIADHGNCETTIDPETGGPHTAHTTNPVPVIVFGGPEGAKLRNGRLADVAPTVLDLMGLDLPPEMTGTSLIGRA.

Residues Asp13 and Ser63 each contribute to the Mn(2+) site. The active-site Phosphoserine intermediate is the Ser63. Substrate-binding positions include His124, 153–154 (RD), Arg183, Arg189, 254–257 (RADR), and Lys330. Positions 396, 400, 437, 438, and 456 each coordinate Mn(2+).

This sequence belongs to the BPG-independent phosphoglycerate mutase family. As to quaternary structure, monomer. Mn(2+) serves as cofactor.

It catalyses the reaction (2R)-2-phosphoglycerate = (2R)-3-phosphoglycerate. It functions in the pathway carbohydrate degradation; glycolysis; pyruvate from D-glyceraldehyde 3-phosphate: step 3/5. In terms of biological role, catalyzes the interconversion of 2-phosphoglycerate and 3-phosphoglycerate. The polypeptide is 2,3-bisphosphoglycerate-independent phosphoglycerate mutase (Paracoccus denitrificans (strain Pd 1222)).